Consider the following 428-residue polypeptide: 3-phosphoshikimate 1-carboxyvinyltransferase (428 aa).

3-phosphoshikimate contacts are provided by lysine 23, serine 24, and arginine 28. Lysine 23 serves as a coordination point for phosphoenolpyruvate. 2 residues coordinate phosphoenolpyruvate: glycine 97 and arginine 125. Residues serine 170, serine 171, glutamine 172, serine 198, aspartate 314, asparagine 337, and lysine 341 each contribute to the 3-phosphoshikimate site. Glutamine 172 serves as a coordination point for phosphoenolpyruvate. The active-site Proton acceptor is the aspartate 314. Positions 345, 387, and 412 each coordinate phosphoenolpyruvate.

The protein belongs to the EPSP synthase family. In terms of assembly, monomer.

Its subcellular location is the cytoplasm. It catalyses the reaction 3-phosphoshikimate + phosphoenolpyruvate = 5-O-(1-carboxyvinyl)-3-phosphoshikimate + phosphate. It functions in the pathway metabolic intermediate biosynthesis; chorismate biosynthesis; chorismate from D-erythrose 4-phosphate and phosphoenolpyruvate: step 6/7. Functionally, catalyzes the transfer of the enolpyruvyl moiety of phosphoenolpyruvate (PEP) to the 5-hydroxyl of shikimate-3-phosphate (S3P) to produce enolpyruvyl shikimate-3-phosphate and inorganic phosphate. The sequence is that of 3-phosphoshikimate 1-carboxyvinyltransferase from Edwardsiella ictaluri (strain 93-146).